The chain runs to 48 residues: uncharacterized protein (48 aa).

The protein resides in the plastid. It localises to the cyanelle. This is an uncharacterized protein from Cyanophora paradoxa.